A 541-amino-acid chain; its full sequence is Carotenoid 9,10(9',10')-cleavage dioxygenase 1 (541 aa).

His-222, His-270, His-336, and His-526 together coordinate Fe cation.

Belongs to the carotenoid oxygenase family. Fe(2+) serves as cofactor.

The enzyme catalyses all-trans-zeaxanthin + 2 O2 = 4,9-dimethyldodeca-2,4,6,8,10-pentaenedial + 2 (3R)-hydroxy-beta-ionone. In terms of biological role, cleaves a variety of carotenoids at the 9-10 and 9'-10' double bonds. Probably not involved in abscisic acid biosynthesis. The protein is Carotenoid 9,10(9',10')-cleavage dioxygenase 1 (CCD1) of Pisum sativum (Garden pea).